The primary structure comprises 29 residues: HEPCGESCVFIPCITTVVGCSCKNKVCYN.

The segment at residues 1-29 (HEPCGESCVFIPCITTVVGCSCKNKVCYN) is a cross-link (cyclopeptide (His-Asn)). Intrachain disulfides connect cysteine 4–cysteine 20, cysteine 8–cysteine 22, and cysteine 13–cysteine 27.

Contains 3 disulfide bonds. Post-translationally, this is a cyclic peptide.

In terms of biological role, probably participates in a plant defense mechanism. The sequence is that of Cyclotide cter-K from Clitoria ternatea (Butterfly pea).